The sequence spans 317 residues: MNTANNTLPTAADWAGEDGAPDAADTRKIERESHKLEKRLCREVGRAITDFNMIEEGDKIMVCMSGGKDSYTLLDILRKLQKRAPVKFDIVAVNLDQKQPGFPEHVLPDYFKSIGVQYHIENQDTYSVVKRVVPEGKTTCSLCSRLRRAILYKVADDLGCTKLALGHHRDDIVATLMLNMFYGGRMKGMPPKLVSDDGKHVVIRPLCYVPEKDTARWAQYQQFPIIPCNLCGSQDGLQRVAVNEMLREWDKKFPGRIESMLRAMGHVVTTHLMDPHLHDFKNAKATGIADPNGDMAFDHEEFPVAPALPGLQVVQLG.

Residues 1–29 are disordered; that stretch reads MNTANNTLPTAADWAGEDGAPDAADTRKI. The PP-loop motif signature appears at 65 to 70; that stretch reads SGGKDS. [4Fe-4S] cluster contacts are provided by C140, C143, and C231.

The protein belongs to the TtcA family. Homodimer. Requires Mg(2+) as cofactor. [4Fe-4S] cluster is required as a cofactor.

It is found in the cytoplasm. It catalyses the reaction cytidine(32) in tRNA + S-sulfanyl-L-cysteinyl-[cysteine desulfurase] + AH2 + ATP = 2-thiocytidine(32) in tRNA + L-cysteinyl-[cysteine desulfurase] + A + AMP + diphosphate + H(+). It participates in tRNA modification. Catalyzes the ATP-dependent 2-thiolation of cytidine in position 32 of tRNA, to form 2-thiocytidine (s(2)C32). The sulfur atoms are provided by the cysteine/cysteine desulfurase (IscS) system. The chain is tRNA-cytidine(32) 2-sulfurtransferase from Acidovorax ebreus (strain TPSY) (Diaphorobacter sp. (strain TPSY)).